The following is a 130-amino-acid chain: Small ribosomal subunit protein uS9 (130 aa).

Residues 106 to 130 (RDSRKVERKKPGLKKARKASQFSKR) are disordered. Residues 111 to 130 (VERKKPGLKKARKASQFSKR) are compositionally biased toward basic residues.

The protein belongs to the universal ribosomal protein uS9 family.

The polypeptide is Small ribosomal subunit protein uS9 (Streptococcus pneumoniae serotype 2 (strain D39 / NCTC 7466)).